Reading from the N-terminus, the 322-residue chain is Lipoyl synthase (322 aa).

[4Fe-4S] cluster-binding residues include cysteine 66, cysteine 71, cysteine 77, cysteine 92, cysteine 96, cysteine 99, and serine 306. In terms of domain architecture, Radical SAM core spans 78 to 295 (FSKGTATFMI…EKEAYELGFS (218 aa)).

This sequence belongs to the radical SAM superfamily. Lipoyl synthase family. Requires [4Fe-4S] cluster as cofactor.

Its subcellular location is the cytoplasm. It carries out the reaction [[Fe-S] cluster scaffold protein carrying a second [4Fe-4S](2+) cluster] + N(6)-octanoyl-L-lysyl-[protein] + 2 oxidized [2Fe-2S]-[ferredoxin] + 2 S-adenosyl-L-methionine + 4 H(+) = [[Fe-S] cluster scaffold protein] + N(6)-[(R)-dihydrolipoyl]-L-lysyl-[protein] + 4 Fe(3+) + 2 hydrogen sulfide + 2 5'-deoxyadenosine + 2 L-methionine + 2 reduced [2Fe-2S]-[ferredoxin]. It functions in the pathway protein modification; protein lipoylation via endogenous pathway; protein N(6)-(lipoyl)lysine from octanoyl-[acyl-carrier-protein]: step 2/2. Catalyzes the radical-mediated insertion of two sulfur atoms into the C-6 and C-8 positions of the octanoyl moiety bound to the lipoyl domains of lipoate-dependent enzymes, thereby converting the octanoylated domains into lipoylated derivatives. The sequence is that of Lipoyl synthase from Neisseria meningitidis serogroup C (strain 053442).